Reading from the N-terminus, the 229-residue chain is Ribonuclease 3 (229 aa).

The RNase III domain maps to 5-134; sequence EQKLEQDFGI…FLGALYLDQG (130 aa). Mg(2+) is bound at residue glutamate 47. Aspartate 51 is an active-site residue. Mg(2+)-binding residues include aspartate 120 and glutamate 123. Residue glutamate 123 is part of the active site. One can recognise a DRBM domain in the interval 160–229; that stretch reads DYKTALQERL…AKSALEQLGN (70 aa).

Belongs to the ribonuclease III family. In terms of assembly, homodimer. It depends on Mg(2+) as a cofactor.

It is found in the cytoplasm. It carries out the reaction Endonucleolytic cleavage to 5'-phosphomonoester.. Functionally, digests double-stranded RNA. Involved in the processing of primary rRNA transcript to yield the immediate precursors to the large and small rRNAs (23S and 16S). Also processes some mRNAs, and tRNAs when they are encoded in the rRNA operon. Its function is as follows. CRISPR (clustered regularly interspaced short palindromic repeat) is an adaptive immune system that provides protection against mobile genetic elements (viruses, transposable elements and conjugative plasmids). CRISPR clusters contain spacers, sequences complementary to antecedent mobile elements, and target invading nucleic acids. CRISPR clusters are transcribed and processed into CRISPR RNA (crRNA). In this organism endogenous ribonuclease 3 and Cas9 are required for correct coprocessing of pre-crRNA and the trans-encoded small RNA (tracrRNA). Cas9, crRNA and tracrRNA are required for cleavage of invading DNA. Complements pre-crRNA and tracRNA coprocessing defects in an rnc deletion in S.pyogenes strain 370. In Streptococcus thermophilus (strain ATCC BAA-491 / LMD-9), this protein is Ribonuclease 3.